A 396-amino-acid polypeptide reads, in one-letter code: Alanine racemase (396 aa).

Catalysis depends on lysine 46, which acts as the Proton acceptor; specific for D-alanine. The residue at position 46 (lysine 46) is an N6-(pyridoxal phosphate)lysine. Arginine 145 is a substrate binding site. The active-site Proton acceptor; specific for L-alanine is tyrosine 280. A substrate-binding site is contributed by methionine 328.

The protein belongs to the alanine racemase family. The cofactor is pyridoxal 5'-phosphate.

The enzyme catalyses L-alanine = D-alanine. It functions in the pathway amino-acid biosynthesis; D-alanine biosynthesis; D-alanine from L-alanine: step 1/1. In terms of biological role, catalyzes the interconversion of L-alanine and D-alanine. May also act on other amino acids. This Brucella abortus (strain 2308) protein is Alanine racemase (alr).